Consider the following 96-residue polypeptide: MTIRPLHDRVVVKRLEAEEKTASGIVLPGAAAEKPDMGEVIAVGAGKIGKDGARRPLDVKAGDKIIFGKYSGQTVKADGEELLVMREEDIFGIVEK.

Belongs to the GroES chaperonin family. In terms of assembly, heptamer of 7 subunits arranged in a ring. Interacts with the chaperonin GroEL.

It is found in the cytoplasm. Its function is as follows. Together with the chaperonin GroEL, plays an essential role in assisting protein folding. The GroEL-GroES system forms a nano-cage that allows encapsulation of the non-native substrate proteins and provides a physical environment optimized to promote and accelerate protein folding. GroES binds to the apical surface of the GroEL ring, thereby capping the opening of the GroEL channel. In Neisseria gonorrhoeae (strain ATCC 700825 / FA 1090), this protein is Co-chaperonin GroES.